A 307-amino-acid chain; its full sequence is HPr kinase/phosphorylase (307 aa).

Catalysis depends on residues histidine 136 and lysine 157. 151 to 158 provides a ligand contact to ATP; it reads GESGIGKS. Mg(2+) is bound at residue serine 158. Aspartate 175 functions as the Proton acceptor; for phosphorylation activity. Proton donor; for dephosphorylation activity in the catalytic mechanism. An important for the catalytic mechanism of both phosphorylation and dephosphorylation region spans residues 198–207; sequence LEVRGMGIID. Glutamate 199 contributes to the Mg(2+) binding site. Residue arginine 240 is part of the active site. The segment at 261-266 is important for the catalytic mechanism of dephosphorylation; that stretch reads PIRPGR.

This sequence belongs to the HPrK/P family. Homohexamer. Mg(2+) is required as a cofactor.

It catalyses the reaction [HPr protein]-L-serine + ATP = [HPr protein]-O-phospho-L-serine + ADP + H(+). It carries out the reaction [HPr protein]-O-phospho-L-serine + phosphate + H(+) = [HPr protein]-L-serine + diphosphate. In terms of biological role, catalyzes the ATP- as well as the pyrophosphate-dependent phosphorylation of a specific serine residue in HPr, a phosphocarrier protein of the phosphoenolpyruvate-dependent sugar phosphotransferase system (PTS). HprK/P also catalyzes the pyrophosphate-producing, inorganic phosphate-dependent dephosphorylation (phosphorolysis) of seryl-phosphorylated HPr (P-Ser-HPr). The two antagonistic activities of HprK/P are regulated by several intracellular metabolites, which change their concentration in response to the absence or presence of rapidly metabolisable carbon sources (glucose, fructose, etc.) in the growth medium. Therefore, by controlling the phosphorylation state of HPr, HPrK/P is a sensor enzyme that plays a major role in the regulation of carbon metabolism and sugar transport: it mediates carbon catabolite repression (CCR), and regulates PTS-catalyzed carbohydrate uptake and inducer exclusion. The sequence is that of HPr kinase/phosphorylase from Clostridium novyi (strain NT).